The sequence spans 353 residues: Protein RecA (353 aa).

Residue 67–74 (GPESSGKT) coordinates ATP.

This sequence belongs to the RecA family.

It localises to the cytoplasm. Its function is as follows. Can catalyze the hydrolysis of ATP in the presence of single-stranded DNA, the ATP-dependent uptake of single-stranded DNA by duplex DNA, and the ATP-dependent hybridization of homologous single-stranded DNAs. It interacts with LexA causing its activation and leading to its autocatalytic cleavage. The sequence is that of Protein RecA from Salmonella agona (strain SL483).